The sequence spans 480 residues: MIVADSECHSEIKGYLPFTRGGVAGPETREEHREGQARRGSRGPSAFIPVEEILREGAESLEQHLGLEALMSSGRVDNLAVVMGLHPDYLSSFWRLHYLLLHTDGPLASSWRHYIAIMAAARHQCSYLVGSHMTEFLQTGGDPEWLLGLHRAPEKLRKLSEVNKLLAHRPWLITKEHIQALLKTGEHSWSLAELIQALVLLTHCHSLASFVFGCGILPEGDAEGSPASQAPSPPSEQGTPPSGDPLNNSGGFEAARDVEALMERMRQLQESLLRDEGASQEEMENRFELEKSESLLVTPSADILEPSPHPDILCFVEDPAFGYEDFTRRGTQAPPTFRAQDYTWEDHGYSLIQRLYPEGGQLLDEKFQVACSLTYNTIAMHSGVDTSMLRRAIWNYIHCVFGIRYDDYDYGEVNQLLERNLKIYIKTVACYPEKTTRRMYNLFWRHFRHSEKVHVNLLLLEARMQAALLYALRAITRYMT.

Residue M1 is modified to N-acetylmethionine. The tract at residues R20–G43 is disordered. Residues E27–A37 are compositionally biased toward basic and acidic residues. An N-terminal domain; mediates the alkylhydroperoxide reductase activity region spans residues G66–T239. C125 functions as the Cysteine sulfenic acid (-SOH) intermediate in the catalytic mechanism. A Glycyl lysine isopeptide (Lys-Gly) (interchain with G-Cter in ubiquitin) cross-link involves residue K175. Disordered stretches follow at residues D221 to G251 and L272 to K291. The span at E223 to G238 shows a compositional bias: low complexity. Phosphoserine is present on S249. Residues P308–T480 form a C-terminal domain; mediates TORC1 regulation region. Residues T374–T377, T386, and E451 each bind L-leucine.

Belongs to the sestrin family. In terms of assembly, interacts with the GATOR2 complex which is composed of MIOS, SEC13, SEH1L, WDR24 and WDR59; the interaction is negatively regulated by leucine. Conveys leucine availability via direct interaction with SEH1L and WDR24 components of the GATOR2 complex. Interacts with RRAGA, RRAGB, RRAGC and RRAGD; may function as a guanine nucleotide dissociation inhibitor for RRAGs and regulate them. May interact with the TORC2 complex. Interacts with KEAP1, RBX1, SQSTM and ULK1; to regulate the degradation of KEAP1. May also associate with the complex composed of TSC1, TSC2 and the AMP-responsive protein kinase/AMPK to regulate TORC1 signaling. May interact with PRDX1. In terms of processing, phosphorylated by ULK1 at multiple sites. Ubiquitinated at Lys-175 by RNF167 via 'Lys-63'-linked polyubiquitination in response to leucine deprivation: ubiquitination promotes SESN2-interaction with the GATOR2 complex, leading to inhibit the TORC1 signaling pathway. Deubiquitinated at Lys-175 by STAMBPL1, promoting the TORC1 signaling pathway. Ubiquitinated by RNF186; ubiquitination mediates proteasomal degradation. As to expression, detected in heart, liver and skeletal muscles (at protein level).

The protein localises to the cytoplasm. The enzyme catalyses a hydroperoxide + L-cysteinyl-[protein] = S-hydroxy-L-cysteinyl-[protein] + an alcohol. In terms of biological role, functions as an intracellular leucine sensor that negatively regulates the mTORC1 signaling pathway through the GATOR complex. In absence of leucine, binds the GATOR subcomplex GATOR2 and prevents mTORC1 signaling. Binding of leucine to SESN2 disrupts its interaction with GATOR2 thereby activating the TORC1 signaling pathway. This stress-inducible metabolic regulator also plays a role in protection against oxidative and genotoxic stresses. May negatively regulate protein translation in response to endoplasmic reticulum stress, via mTORC1. May positively regulate the transcription by NFE2L2 of genes involved in the response to oxidative stress by facilitating the SQSTM1-mediated autophagic degradation of KEAP1. May also mediate TP53 inhibition of TORC1 signaling upon genotoxic stress. Moreover, may prevent the accumulation of reactive oxygen species (ROS) through the alkylhydroperoxide reductase activity born by the N-terminal domain of the protein. Was originally reported to contribute to oxidative stress resistance by reducing PRDX1. However, this could not be confirmed. The sequence is that of Sestrin-2 from Mus musculus (Mouse).